A 135-amino-acid chain; its full sequence is Ribonuclease VapC9 (135 aa).

In terms of domain architecture, PINc spans 15–118 (VVDTNVLMYV…LKRKAKQRGI (104 aa)). Positions 17 and 88 each coordinate Mg(2+).

Belongs to the PINc/VapC protein family. In terms of assembly, dimer. It depends on Mg(2+) as a cofactor.

Toxic component of a type II toxin-antitoxin (TA) system. An RNase. This Archaeoglobus fulgidus (strain ATCC 49558 / DSM 4304 / JCM 9628 / NBRC 100126 / VC-16) protein is Ribonuclease VapC9.